We begin with the raw amino-acid sequence, 182 residues long: ATP synthase subunit delta (182 aa).

Belongs to the ATPase delta chain family. F-type ATPases have 2 components, F(1) - the catalytic core - and F(0) - the membrane proton channel. F(1) has five subunits: alpha(3), beta(3), gamma(1), delta(1), epsilon(1). CF(0) has four main subunits: a(1), b(1), b'(1) and c(10-14). The alpha and beta chains form an alternating ring which encloses part of the gamma chain. F(1) is attached to F(0) by a central stalk formed by the gamma and epsilon chains, while a peripheral stalk is formed by the delta, b and b' chains.

The protein localises to the cellular thylakoid membrane. F(1)F(0) ATP synthase produces ATP from ADP in the presence of a proton or sodium gradient. F-type ATPases consist of two structural domains, F(1) containing the extramembraneous catalytic core and F(0) containing the membrane proton channel, linked together by a central stalk and a peripheral stalk. During catalysis, ATP synthesis in the catalytic domain of F(1) is coupled via a rotary mechanism of the central stalk subunits to proton translocation. Functionally, this protein is part of the stalk that links CF(0) to CF(1). It either transmits conformational changes from CF(0) to CF(1) or is implicated in proton conduction. This Synechococcus sp. (strain JA-2-3B'a(2-13)) (Cyanobacteria bacterium Yellowstone B-Prime) protein is ATP synthase subunit delta.